Here is a 1025-residue protein sequence, read N- to C-terminus: Probable beta-galactosidase B (1025 aa).

The N-terminal stretch at 1 to 21 is a signal peptide; it reads MATAFWLLLFLLGSLHVLTAA. Asparagine 23 carries an N-linked (GlcNAc...) asparagine glycan. Substrate is bound at residue tyrosine 90. A glycan (N-linked (GlcNAc...) asparagine) is linked at asparagine 100. Residues asparagine 135, alanine 136, glutamate 137, and asparagine 195 each coordinate substrate. The active-site Proton donor is the glutamate 196. N-linked (GlcNAc...) asparagine glycosylation is present at asparagine 211. Tyrosine 265 serves as a coordination point for substrate. Residues cysteine 271 and cysteine 324 are joined by a disulfide bond. The active-site Nucleophile is the glutamate 308. Tyrosine 373 provides a ligand contact to substrate. N-linked (GlcNAc...) asparagine glycans are attached at residues asparagine 411, asparagine 456, asparagine 736, asparagine 776, asparagine 884, asparagine 925, and asparagine 926.

It belongs to the glycosyl hydrolase 35 family.

The protein localises to the secreted. It catalyses the reaction Hydrolysis of terminal non-reducing beta-D-galactose residues in beta-D-galactosides.. Cleaves beta-linked terminal galactosyl residues from gangliosides, glycoproteins, and glycosaminoglycans. The chain is Probable beta-galactosidase B (lacB) from Emericella nidulans (strain FGSC A4 / ATCC 38163 / CBS 112.46 / NRRL 194 / M139) (Aspergillus nidulans).